The sequence spans 474 residues: Alpha-galactosidase (474 aa).

The first 22 residues, 1-22, serve as a signal peptide directing secretion; sequence MINFSLLTSIVLLASKVVGVSP. 2 disulfide bridges follow: C43–C75 and C122–C152. N-linked (GlcNAc...) asparagine glycosylation is present at N44. Positions 73, 74, and 148 each coordinate substrate. The active-site Nucleophile is the D150. The N-linked (GlcNAc...) asparagine glycan is linked to N176. Substrate is bound at residue R206. D210 (proton donor) is an active-site residue. Cystine bridges form between C222–C238 and C224–C231. Q252 contributes to the substrate binding site. N271, N414, N423, N436, and N455 each carry an N-linked (GlcNAc...) asparagine glycan.

Belongs to the glycosyl hydrolase 27 family. In terms of assembly, homotetramer.

The protein resides in the secreted. It carries out the reaction Hydrolysis of terminal, non-reducing alpha-D-galactose residues in alpha-D-galactosides, including galactose oligosaccharides, galactomannans and galactolipids.. This is Alpha-galactosidase (MEL) from Torulaspora delbrueckii (Yeast).